The chain runs to 463 residues: Zinc finger protein interacting with ribonucleoprotein K (463 aa).

The region spanning 14-89 is the KRAB domain; it reads VTFQDVAICF…PKTNLCEKCV (76 aa). 2 disordered regions span residues 106–128 and 171–211; these read HSTE…KPLE and KYRK…TSNG. The segment covering 174-191 has biased composition (basic and acidic residues); the sequence is KSTEGRKETSHESDKSEE. Polar residues predominate over residues 192–201; the sequence is CQSLSSQKQT. 9 consecutive C2H2-type zinc fingers follow at residues 215 to 237, 243 to 265, 271 to 293, 299 to 321, 327 to 349, 355 to 377, 383 to 405, 411 to 433, and 439 to 461; these read YECS…QRVH, WECR…RRIH, YECS…QKTH, YECS…KRVH, YKCS…RRIH, YECR…QRVH, YECS…QVVH, and YECD…QKCH.

It belongs to the krueppel C2H2-type zinc-finger protein family. As to quaternary structure, interacts with HNRPK. As to expression, expressed in ovary and liver, and at lower levels in brain and muscle.

The protein localises to the nucleus. Functionally, may be a transcriptional repressor. The chain is Zinc finger protein interacting with ribonucleoprotein K (Zik1) from Mus musculus (Mouse).